A 276-amino-acid polypeptide reads, in one-letter code: NADPH-dependent 7-cyano-7-deazaguanine reductase (276 aa).

83–85 (IES) is a substrate binding site. 85 to 86 (SK) contacts NADPH. The active-site Thioimide intermediate is the Cys-184. Asp-191 (proton donor) is an active-site residue. A substrate-binding site is contributed by 223 to 224 (HE). Residue 252–253 (RG) participates in NADPH binding.

It belongs to the GTP cyclohydrolase I family. QueF type 2 subfamily. Homodimer.

Its subcellular location is the cytoplasm. The enzyme catalyses 7-aminomethyl-7-carbaguanine + 2 NADP(+) = 7-cyano-7-deazaguanine + 2 NADPH + 3 H(+). The protein operates within tRNA modification; tRNA-queuosine biosynthesis. In terms of biological role, catalyzes the NADPH-dependent reduction of 7-cyano-7-deazaguanine (preQ0) to 7-aminomethyl-7-deazaguanine (preQ1). The chain is NADPH-dependent 7-cyano-7-deazaguanine reductase from Pseudomonas paraeruginosa (strain DSM 24068 / PA7) (Pseudomonas aeruginosa (strain PA7)).